The chain runs to 217 residues: Redox-sensing transcriptional repressor Rex (217 aa).

Positions 17–56 (RYLRYVEDLLNHDVLRISSSELSQRMGYTASQVRQDFNNF) form a DNA-binding region, H-T-H motif. 91 to 96 (GVGNLG) lines the NAD(+) pocket.

It belongs to the transcriptional regulatory Rex family. As to quaternary structure, homodimer.

The protein resides in the cytoplasm. Its function is as follows. Modulates transcription in response to changes in cellular NADH/NAD(+) redox state. The protein is Redox-sensing transcriptional repressor Rex of Caldicellulosiruptor bescii (strain ATCC BAA-1888 / DSM 6725 / KCTC 15123 / Z-1320) (Anaerocellum thermophilum).